The chain runs to 581 residues: Proline--tRNA ligase (581 aa).

It belongs to the class-II aminoacyl-tRNA synthetase family. ProS type 1 subfamily. Homodimer.

It localises to the cytoplasm. It catalyses the reaction tRNA(Pro) + L-proline + ATP = L-prolyl-tRNA(Pro) + AMP + diphosphate. Functionally, catalyzes the attachment of proline to tRNA(Pro) in a two-step reaction: proline is first activated by ATP to form Pro-AMP and then transferred to the acceptor end of tRNA(Pro). As ProRS can inadvertently accommodate and process non-cognate amino acids such as alanine and cysteine, to avoid such errors it has two additional distinct editing activities against alanine. One activity is designated as 'pretransfer' editing and involves the tRNA(Pro)-independent hydrolysis of activated Ala-AMP. The other activity is designated 'posttransfer' editing and involves deacylation of mischarged Ala-tRNA(Pro). The misacylated Cys-tRNA(Pro) is not edited by ProRS. The chain is Proline--tRNA ligase from Acidovorax ebreus (strain TPSY) (Diaphorobacter sp. (strain TPSY)).